A 203-amino-acid chain; its full sequence is MVRVKICGITSLEDALVAVEAGADALGFVFHDESPRHVTPEQAAGIIAGLPPFIQTVGLFVNRPPAFVNDTATRCRLDLVQLHGDEPPEFCDAVERRVIKAFRVKDISSLDPIRHYRVAAHLLDAYSPKAYGGTGLTFNWDIAAAAKAFGPLILAGGLTPDNVREAVETVKPYAVDVSGGVESAPGRKDAARVREFIRRAKGW.

The protein belongs to the TrpF family.

It catalyses the reaction N-(5-phospho-beta-D-ribosyl)anthranilate = 1-(2-carboxyphenylamino)-1-deoxy-D-ribulose 5-phosphate. Its pathway is amino-acid biosynthesis; L-tryptophan biosynthesis; L-tryptophan from chorismate: step 3/5. The chain is N-(5'-phosphoribosyl)anthranilate isomerase from Geobacter sulfurreducens (strain ATCC 51573 / DSM 12127 / PCA).